A 312-amino-acid chain; its full sequence is Acetyl-coenzyme A carboxylase carboxyl transferase subunit alpha (312 aa).

Positions Glu-36–Ala-286 constitute a CoA carboxyltransferase C-terminal domain.

Belongs to the AccA family. In terms of assembly, acetyl-CoA carboxylase is a heterohexamer composed of biotin carboxyl carrier protein (AccB), biotin carboxylase (AccC) and two subunits each of ACCase subunit alpha (AccA) and ACCase subunit beta (AccD).

The protein localises to the cytoplasm. It carries out the reaction N(6)-carboxybiotinyl-L-lysyl-[protein] + acetyl-CoA = N(6)-biotinyl-L-lysyl-[protein] + malonyl-CoA. The protein operates within lipid metabolism; malonyl-CoA biosynthesis; malonyl-CoA from acetyl-CoA: step 1/1. Functionally, component of the acetyl coenzyme A carboxylase (ACC) complex. First, biotin carboxylase catalyzes the carboxylation of biotin on its carrier protein (BCCP) and then the CO(2) group is transferred by the carboxyltransferase to acetyl-CoA to form malonyl-CoA. The polypeptide is Acetyl-coenzyme A carboxylase carboxyl transferase subunit alpha (Sulfurovum sp. (strain NBC37-1)).